We begin with the raw amino-acid sequence, 289 residues long: UPF0173 metal-dependent hydrolase H16_A2129 (289 aa).

Belongs to the UPF0173 family.

This is UPF0173 metal-dependent hydrolase H16_A2129 from Cupriavidus necator (strain ATCC 17699 / DSM 428 / KCTC 22496 / NCIMB 10442 / H16 / Stanier 337) (Ralstonia eutropha).